The following is a 312-amino-acid chain: Mas-related G-protein coupled receptor member E (312 aa).

Residues 1 to 20 (MMEPREAGQHVGAANGAQED) lie on the Extracellular side of the membrane. A helical membrane pass occupies residues 21–41 (VAFNLIILSLTEGLGLGGLLG). The Cytoplasmic portion of the chain corresponds to 42–59 (NGAVLWLLSSNVYRNPFA). A helical membrane pass occupies residues 60–80 (IYLLDVACADLIFLGCHMVAI). Residues 81–106 (VPDLLQGRLDFPGFVQTSLATLRFFC) lie on the Extracellular side of the membrane. Residues 107–127 (YIVGLSLLAAVSVEQCLAALF) form a helical membrane-spanning segment. The Cytoplasmic segment spans residues 128–141 (PAWYSCRRPRHLTT). Residues 142–162 (CVCALTWALCLLLHLLLSGAC) traverse the membrane as a helical segment. Residues 163–176 (TQFFGEPSRHLCRT) are Extracellular-facing. The chain crosses the membrane as a helical span at residues 177–197 (LWLVAAVLLALLCCTMCGASL). The Cytoplasmic portion of the chain corresponds to 198-217 (MLLLRVERGPQRPPPRGFPG). The chain crosses the membrane as a helical span at residues 218–238 (LILLTVLLFLFCGLPFGIYWL). The Extracellular portion of the chain corresponds to 239–241 (SRN). Residues 242–262 (LLWYIPHYFYHFSFLMAAVHC) form a helical membrane-spanning segment. The Cytoplasmic portion of the chain corresponds to 263–312 (AAKPVVYFCLGSAQGRRLPLRLVLQRALGDEAELGAVRETSRRGLVDIAA).

Belongs to the G-protein coupled receptor 1 family. Mas subfamily.

The protein resides in the cell membrane. Orphan receptor. May regulate nociceptor function and/or development, including the sensation or modulation of pain. The sequence is that of Mas-related G-protein coupled receptor member E (MRGPRE) from Homo sapiens (Human).